The chain runs to 726 residues: Catalase-peroxidase (726 aa).

Residues 1-33 (MSTTDDTHNTLSTGKCPFHQGGHDRSAGAGTAS) are disordered. The segment at residues 105 to 226 (WHGAGTYRSI…LGATEMGLIY (122 aa)) is a cross-link (tryptophyl-tyrosyl-methioninium (Trp-Tyr) (with M-252)). His-106 (proton acceptor) is an active-site residue. Positions 226 to 252 (YVNPEGPDHSGEPLSAAAAIRATFGNM) form a cross-link, tryptophyl-tyrosyl-methioninium (Tyr-Met) (with W-105). His-267 contacts heme b.

This sequence belongs to the peroxidase family. Peroxidase/catalase subfamily. Homodimer or homotetramer. Heme b serves as cofactor. In terms of processing, formation of the three residue Trp-Tyr-Met cross-link is important for the catalase, but not the peroxidase activity of the enzyme.

The enzyme catalyses H2O2 + AH2 = A + 2 H2O. It carries out the reaction 2 H2O2 = O2 + 2 H2O. Bifunctional enzyme with both catalase and broad-spectrum peroxidase activity. The polypeptide is Catalase-peroxidase (Salmonella paratyphi B (strain ATCC BAA-1250 / SPB7)).